The chain runs to 196 residues: DnaA initiator-associating protein DiaA (196 aa).

Positions 34-196 constitute an SIS domain; the sequence is LVQSLLNGNK…DSTLFPHQDE (163 aa).

It belongs to the SIS family. DiaA subfamily. In terms of assembly, homotetramer; dimer of dimers.

In terms of biological role, required for the timely initiation of chromosomal replication via direct interactions with the DnaA initiator protein. The chain is DnaA initiator-associating protein DiaA from Serratia proteamaculans (strain 568).